We begin with the raw amino-acid sequence, 198 residues long: Small ribosomal subunit protein uS5 (198 aa).

The S5 DRBM domain maps to 46–109 (LEDDVLEISM…NNAKLNIFKV (64 aa)).

Belongs to the universal ribosomal protein uS5 family. Part of the 30S ribosomal subunit. Contacts protein S4.

Functionally, with S4 and S12 plays an important role in translational accuracy. This Archaeoglobus fulgidus (strain ATCC 49558 / DSM 4304 / JCM 9628 / NBRC 100126 / VC-16) protein is Small ribosomal subunit protein uS5.